A 1191-amino-acid polypeptide reads, in one-letter code: MDGVGKSVKLCGGPIGYIYATPKCSVPVDELAILAAKSNDCDDAVLPLVAGLTVESDFVWNVAAVAGTKTTGLGSGGTTLKLVPTHYHPCVFVFYGGDCIKPCTKAPNLTKACDLARERFGYSAYSSPAPTAFETTGQQICEALEMDAQNVMLYLVVTELFKEVIYLCNSFLHFGGSDVVTINNADVRRIPIYPLHLVLPDFNRITNEPFSEKPRALGEGAIMPKAFYNDSLCRLLHGYVLSTTAVGLRVRNIDAIARGAAHLCFDENHEGTLLPADTTFTAFTPAAETTKGQSKMGKREGSDVSGGGYERRTASLMASDATLAIENVISASVYEDPIPDVNKWPIYCNPVGYADRIEALSAYMARVAGLVGAMVFSSNSVIYMTEVGEAGSTEGKETSTTAPSFYRFFQIAAPHLSANPLVDRDGKPVSGENLSKSTSASQSEYSLDYLILACGFCPQLLARFLFYLERCDGGAKACHHDLDTVKFVSSAIDADMPCELCDKTSRIYCAHTTIKRLVYRLPKFGYQMRGAMGLFGAMTNNYCDVNALGSYAQFSTLKRSEGEASRSVMQDTYRLTVERMMKALEKEGLLTCDDPTNMASADANIRDGNSFIRAISTMKNIIESEASQLMRNLTEIREYNIREGLGDANHTLSLAVEPYASGICPVLAFLSRRTIIAVVQDMALSQCSIVMQGQQVEARNFRTQFQAVLKRRVLELQNAGFITSKTITVTLEDQQICVPDPSKSQYDSVISNMEGDLVKVTVEIFRELKVKNKVLFGGGIAGAASEATKSRLAGMVEAYQRPTKTMHVLNGPLGFAVKRYHTLLFPDVKMPNGATPNALWFWILLLRNQLPAGILSKEEEDKSLFIKKFTKSYADMNYINISPTCFGDLAQFYLANTILKYCSHKHFFINTISALVAVSRRPRDPAIVLPWIERPITKGQDVAPAAQQLIASMSDHKDIWCATFSSTNLVGSIMTTKPFVVIGISISKYHGMAGSTKVFQSGNWGNIMGGRNVCSLMSFDRTHRYVMTCPRVGFVAEQPIFSSGIKETTLIDRVRMVLSEESAAPHAAVYMLALKMVGDRVRQMELEDWMEITNDEYISSLIDELNKQVEEAEGGWNADAAMTLAKEMVNMAMSIPTDGPTFDFDACDENLEGHADGQTISETNLKRPNMNVFDLEPIPEKRVPVLSVDML.

Residues 288-307 are disordered; it reads ETTKGQSKMGKREGSDVSGG. The segment at 498–511 is a zinc-finger region; it reads CELCDKTSRIYCAH. The short motif at 841 to 842 is the Required for filament formation element; sequence FW. Positions 1166-1191 are required for nuclear localization; that stretch reads KRPNMNVFDLEPIPEKRVPVLSVDML.

It belongs to the herpesviridae major DNA-binding protein family. In terms of assembly, homooligomers. Forms double-helical filaments necessary for the formation of replication compartments within the host nucleus. Interacts with the origin-binding protein. Interacts with the helicase primase complex; this interaction stimulates primer synthesis activity of the helicase-primase complex. Interacts with the DNA polymerase. Interacts with the alkaline exonuclease; this interaction increases its nuclease processivity.

It is found in the host nucleus. Its function is as follows. Plays several crucial roles in viral infection. Participates in the opening of the viral DNA origin to initiate replication by interacting with the origin-binding protein. May disrupt loops, hairpins and other secondary structures present on ssDNA to reduce and eliminate pausing of viral DNA polymerase at specific sites during elongation. Promotes viral DNA recombination by performing strand-transfer, characterized by the ability to transfer a DNA strand from a linear duplex to a complementary single-stranded DNA circle. Can also catalyze the renaturation of complementary single strands. Additionally, reorganizes the host cell nucleus, leading to the formation of prereplicative sites and replication compartments. This process is driven by the protein which can form double-helical filaments in the absence of DNA. This chain is Major DNA-binding protein, found in Gallid herpesvirus 2 (strain Chicken/Md5/ATCC VR-987) (GaHV-2).